A 467-amino-acid chain; its full sequence is Venom prothrombin activator pseutarin-C catalytic subunit (467 aa).

Positions 1 to 22 are cleaved as a signal peptide; the sequence is MAPQLLLCLILTFLWSLPEAES. The propeptide occupies 23–40; sequence NVFLKSKVANRFLQRTKR. A Gla domain is found at 41-86; the sequence is ANSLVEEFKSGNIERECIEERCSKEEAREVFEDDEKTETFWNVYVD. 10 positions are modified to 4-carboxyglutamate: Glu46, Glu47, Glu54, Glu56, Glu59, Glu60, Glu65, Glu66, Glu69, and Glu72. Cysteines 57 and 62 form a disulfide. The EGF-like 1; calcium-binding domain maps to 86–122; it reads DGDQCSSNPCHYRGICKDGIGSYTCTCLSGYEGKNCE. 11 disulfide bridges follow: Cys90–Cys101, Cys95–Cys110, Cys112–Cys121, Cys129–Cys140, Cys136–Cys149, Cys151–Cys164, Cys172–Cys329, Cys216–Cys221, Cys236–Cys252, Cys377–Cys391, and Cys402–Cys430. An O-linked (Hex...) serine glycan is attached at Ser92. In terms of domain architecture, EGF-like 2 spans 129-164; the sequence is CRVDNGNCWHFCKSVQNDIQCSCAEGYLLGEDGHSC. A propeptide spans 182–209 (activation peptide); the sequence is REASLPDFVQSHNATLLKKSDNPSPDIR. A Peptidase S1 domain is found at 210 to 454; that stretch reads IVNGMDCKLG…FIPWIKRIMR (245 aa). His251 (charge relay system) is an active-site residue. Residue Asn254 is glycosylated (N-linked (GlcNAc...) asparagine). The Charge relay system role is filled by Asp309. Ser406 acts as the Charge relay system in catalysis.

Belongs to the peptidase S1 family. Snake venom subfamily. As to quaternary structure, heterodimer of a light and a heavy chains; disulfide-linked. Is associated with pseutarin-C non-catalytic subunit (AC Q7SZN0) in a non-covalent manner. In terms of processing, gamma-carboxyglutamate residues are formed by vitamin K dependent carboxylation. These residues are essential for the binding of calcium. Expressed by the venom gland.

It localises to the secreted. It catalyses the reaction Selective cleavage of Arg-|-Thr and then Arg-|-Ile bonds in prothrombin to form thrombin.. With respect to regulation, activated by calcium and negatively charged phospholipids. In terms of biological role, snake prothrombin activator that attacks the hemostatic system of prey. This non-catalytic subunit is functionally similar to blood coagulation factor V. It serves as a critical cofactor for the prothrombinase activity of the catalytic subunit, which is similar to the blood coagulation factor X. The complex converts prothrombin to thrombin by sequential cleavage at two positions, Arg-320 followed by Arg-271. Cleavage at Arg-320 produces an active intermediate known as meizothrombin. Meizothrombin is the 'second' substrate for prothrombinase, and it docks in an altered manner to present the second cleavage site (271). Cleavage at Arg-271 releases active thrombin from its pro-fragment. This order of events is reversed if the protease component of prothrombinase is used on its own, suggesting that the 271 site is inherently more accessible to proteolysis. The complex converts prothrombin to thrombin in presence but also in the absence of membrane. The chain is Venom prothrombin activator pseutarin-C catalytic subunit from Pseudonaja textilis (Eastern brown snake).